The primary structure comprises 257 residues: Hydroxyacylglutathione hydrolase (257 aa).

Zn(2+) contacts are provided by H54, H56, D58, H59, H113, D137, and H175.

It belongs to the metallo-beta-lactamase superfamily. Glyoxalase II family. Monomer. Zn(2+) serves as cofactor.

It carries out the reaction an S-(2-hydroxyacyl)glutathione + H2O = a 2-hydroxy carboxylate + glutathione + H(+). The protein operates within secondary metabolite metabolism; methylglyoxal degradation; (R)-lactate from methylglyoxal: step 2/2. Its function is as follows. Thiolesterase that catalyzes the hydrolysis of S-D-lactoyl-glutathione to form glutathione and D-lactic acid. The protein is Hydroxyacylglutathione hydrolase of Nostoc sp. (strain PCC 7120 / SAG 25.82 / UTEX 2576).